Reading from the N-terminus, the 67-residue chain is UPF0437 protein y4xE (67 aa).

The protein belongs to the UPF0437 family.

The protein is UPF0437 protein y4xE of Sinorhizobium fredii (strain NBRC 101917 / NGR234).